A 337-amino-acid polypeptide reads, in one-letter code: Inositol 2-dehydrogenase 1 (337 aa).

The protein belongs to the Gfo/Idh/MocA family. In terms of assembly, homotetramer.

It catalyses the reaction myo-inositol + NAD(+) = scyllo-inosose + NADH + H(+). Functionally, involved in the oxidation of myo-inositol (MI) to 2-keto-myo-inositol (2KMI or 2-inosose). The sequence is that of Inositol 2-dehydrogenase 1 from Paenarthrobacter aurescens (strain TC1).